The chain runs to 256 residues: Kallikrein-15 (256 aa).

Residues 1–16 (MWLLLTLSFLLASTAA) form the signal peptide. The propeptide at 17-21 (QDGDK) is activation peptide. A Peptidase S1 domain is found at 22 to 254 (LLEGDECAPH…YLEWIRETMK (233 aa)). Residues cysteine 47 and cysteine 63 are joined by a disulfide bond. Residues histidine 62 and aspartate 106 each act as charge relay system in the active site. 3 cysteine pairs are disulfide-bonded: cysteine 138–cysteine 215, cysteine 180–cysteine 194, and cysteine 205–cysteine 230. N-linked (GlcNAc...) asparagine glycosylation occurs at asparagine 171. Residue serine 209 is the Charge relay system of the active site. Residue asparagine 232 is glycosylated (N-linked (GlcNAc...) asparagine).

It belongs to the peptidase S1 family. Kallikrein subfamily. As to expression, highest expression in the thyroid gland. Also expressed in the prostate, salivary, and adrenal glands and in the colon testis and kidney.

The protein localises to the secreted. Functionally, protease whose physiological substrate is not yet known. The chain is Kallikrein-15 (KLK15) from Homo sapiens (Human).